A 298-amino-acid polypeptide reads, in one-letter code: Small ribosomal subunit biogenesis GTPase RsgA (298 aa).

The region spanning 67–228 (TNELVRPPIS…IADTPGFSSL (162 aa)) is the CP-type G domain. GTP-binding positions include 116-119 (TKMD) and 171-179 (GQSGVGKSS). Zn(2+) contacts are provided by Cys-252, Cys-257, His-259, and Cys-265.

Belongs to the TRAFAC class YlqF/YawG GTPase family. RsgA subfamily. As to quaternary structure, monomer. Associates with 30S ribosomal subunit, binds 16S rRNA. Zn(2+) is required as a cofactor.

The protein localises to the cytoplasm. In terms of biological role, one of several proteins that assist in the late maturation steps of the functional core of the 30S ribosomal subunit. Helps release RbfA from mature subunits. May play a role in the assembly of ribosomal proteins into the subunit. Circularly permuted GTPase that catalyzes slow GTP hydrolysis, GTPase activity is stimulated by the 30S ribosomal subunit. In Bacillus pumilus (strain SAFR-032), this protein is Small ribosomal subunit biogenesis GTPase RsgA.